The chain runs to 203 residues: MKLHLASGNLHKAEEFAVLAAASARDDAPAIEIVSARAMGGMPEVVEDTGTFVGNARKKAAALRVRLPAGSWVLADDSGVCVDALHGGPGVESAYYAGPEASGRANYEKLLRVLADVPDERRGAYFFCLLLVLDGAGAEYVFEGRCQGRLLREPRGSAGFGYDPIFVPDGFDRSYAELGEDVKNRISHRARAWAQLAEWGRRS.

7–12 (SGNLHK) serves as a coordination point for substrate. Positions 47 and 77 each coordinate Mg(2+). Catalysis depends on aspartate 77, which acts as the Proton acceptor. Substrate is bound by residues serine 78, 160-163 (FGYD), lysine 183, and 188-189 (HR).

It belongs to the HAM1 NTPase family. As to quaternary structure, homodimer. It depends on Mg(2+) as a cofactor.

It carries out the reaction XTP + H2O = XMP + diphosphate + H(+). The enzyme catalyses dITP + H2O = dIMP + diphosphate + H(+). It catalyses the reaction ITP + H2O = IMP + diphosphate + H(+). Its function is as follows. Pyrophosphatase that catalyzes the hydrolysis of nucleoside triphosphates to their monophosphate derivatives, with a high preference for the non-canonical purine nucleotides XTP (xanthosine triphosphate), dITP (deoxyinosine triphosphate) and ITP. Seems to function as a house-cleaning enzyme that removes non-canonical purine nucleotides from the nucleotide pool, thus preventing their incorporation into DNA/RNA and avoiding chromosomal lesions. This is dITP/XTP pyrophosphatase from Opitutus terrae (strain DSM 11246 / JCM 15787 / PB90-1).